We begin with the raw amino-acid sequence, 517 residues long: Protein MGF 505-2R (517 aa).

Belongs to the asfivirus MGF 505 family.

Its function is as follows. Plays a role in virus cell tropism, and may be required for efficient virus replication in macrophages. The sequence is that of Protein MGF 505-2R from Ornithodoros (relapsing fever ticks).